We begin with the raw amino-acid sequence, 226 residues long: Late protein I226R (226 aa).

Residues 1 to 16 (MKMETFLVCLFHNADG) form the signal peptide. N-linked (GlcNAc...) asparagine; by host glycosylation is found at asparagine 142 and asparagine 164.

This sequence belongs to the asfivirus I226R family.

Functionally, plays a role in the inhibition of host NF-kappa-B and IRF3 signaling pathways. Mechanistically, promotes the degradation of host IKBKG through enhancing its ubiquitination leading to inhibition of both pathways. The sequence is that of Late protein I226R from African swine fever virus (isolate Warthog/Namibia/Wart80/1980) (ASFV).